The sequence spans 212 residues: Thymidylate kinase (212 aa).

11–18 (GMEGAGKS) contacts ATP.

It belongs to the thymidylate kinase family.

It carries out the reaction dTMP + ATP = dTDP + ADP. In terms of biological role, phosphorylation of dTMP to form dTDP in both de novo and salvage pathways of dTTP synthesis. The chain is Thymidylate kinase from Colwellia psychrerythraea (strain 34H / ATCC BAA-681) (Vibrio psychroerythus).